Consider the following 154-residue polypeptide: 6,7-dimethyl-8-ribityllumazine synthase (154 aa).

Residues W22, 56–58 (AWE), and 80–82 (CVV) each bind 5-amino-6-(D-ribitylamino)uracil. 85 to 86 (DT) is a binding site for (2S)-2-hydroxy-3-oxobutyl phosphate. H88 functions as the Proton donor in the catalytic mechanism. N113 is a 5-amino-6-(D-ribitylamino)uracil binding site. Residue R127 coordinates (2S)-2-hydroxy-3-oxobutyl phosphate.

It belongs to the DMRL synthase family. Forms an icosahedral capsid composed of 60 subunits, arranged as a dodecamer of pentamers.

It carries out the reaction (2S)-2-hydroxy-3-oxobutyl phosphate + 5-amino-6-(D-ribitylamino)uracil = 6,7-dimethyl-8-(1-D-ribityl)lumazine + phosphate + 2 H2O + H(+). It functions in the pathway cofactor biosynthesis; riboflavin biosynthesis; riboflavin from 2-hydroxy-3-oxobutyl phosphate and 5-amino-6-(D-ribitylamino)uracil: step 1/2. Catalyzes the formation of 6,7-dimethyl-8-ribityllumazine by condensation of 5-amino-6-(D-ribitylamino)uracil with 3,4-dihydroxy-2-butanone 4-phosphate. This is the penultimate step in the biosynthesis of riboflavin. This chain is 6,7-dimethyl-8-ribityllumazine synthase, found in Xylella fastidiosa (strain 9a5c).